Consider the following 141-residue polypeptide: Large ribosomal subunit protein uL11 (141 aa).

It belongs to the universal ribosomal protein uL11 family. Part of the ribosomal stalk of the 50S ribosomal subunit. Interacts with L10 and the large rRNA to form the base of the stalk. L10 forms an elongated spine to which L12 dimers bind in a sequential fashion forming a multimeric L10(L12)X complex. One or more lysine residues are methylated.

Forms part of the ribosomal stalk which helps the ribosome interact with GTP-bound translation factors. This is Large ribosomal subunit protein uL11 from Streptococcus agalactiae serotype Ia (strain ATCC 27591 / A909 / CDC SS700).